The chain runs to 89 residues: Protein S100-A6 (89 aa).

EF-hand domains follow at residues 12–47 (LVAIFHKYSGKEGDKHTLSKKELKELIQKELTIGSK) and 48–83 (LQDAEIARLMDDLDRNKDQEVNFQEYVAFLGALALI). Ca(2+) is bound by residues threonine 28 and glutamate 33. Lysine 40 is subject to N6-acetyllysine. Serine 46 carries the phosphoserine modification. Lysine 47 is subject to N6-acetyllysine; alternate. N6-succinyllysine; alternate is present on lysine 47. The Ca(2+) site is built by aspartate 61, asparagine 63, aspartate 65, glutamate 67, and glutamate 72.

It belongs to the S-100 family. In terms of assembly, homodimer; head to tail assembly of 2 subunits. Interacts with CACYBP in a calcium-dependent manner. Interacts with ANXA2 and ANXA11 (via N-terminus). Interacts with SUGT1. Interacts with TP53; has higher affinity for TP53 that is phosphorylated on its N-terminal domain, and lower affinity for TP53 that is phosphorylated on its C-terminal domain. Interacts with tropomyosin. Interacts with FKBP4. Interacts with PPP5C (via TPR repeats); the interaction is calcium-dependent and modulates PPP5C activity. Interacts with TPPP; this interaction inhibits TPPP dimerization.

Its subcellular location is the nucleus envelope. The protein localises to the cytoplasm. The protein resides in the cell membrane. May function as calcium sensor and modulator, contributing to cellular calcium signaling. May function by interacting with other proteins, such as TPR-containing proteins, and indirectly play a role in many physiological processes such as the reorganization of the actin cytoskeleton and in cell motility. Binds 2 calcium ions. Calcium binding is cooperative. This chain is Protein S100-A6 (S100a6), found in Mus musculus (Mouse).